A 704-amino-acid polypeptide reads, in one-letter code: Elongation factor G 1 (704 aa).

The region spanning 8 to 290 (ERYRNIGICA…CVVEYMPAPT (283 aa)) is the tr-type G domain. GTP-binding positions include 17 to 24 (AHVDAGKT), 88 to 92 (DTPGH), and 142 to 145 (NKMD).

This sequence belongs to the TRAFAC class translation factor GTPase superfamily. Classic translation factor GTPase family. EF-G/EF-2 subfamily.

The protein localises to the cytoplasm. Its function is as follows. Catalyzes the GTP-dependent ribosomal translocation step during translation elongation. During this step, the ribosome changes from the pre-translocational (PRE) to the post-translocational (POST) state as the newly formed A-site-bound peptidyl-tRNA and P-site-bound deacylated tRNA move to the P and E sites, respectively. Catalyzes the coordinated movement of the two tRNA molecules, the mRNA and conformational changes in the ribosome. The polypeptide is Elongation factor G 1 (Pseudoalteromonas translucida (strain TAC 125)).